A 310-amino-acid chain; its full sequence is Repression factor of MSEs protein 1 (310 aa).

Disordered stretches follow at residues 83-155 (TQEV…EANA) and 192-230 (DGIR…DEGE). Residues 92-106 (RNTSSSSSSTRSNSS) show a composition bias toward low complexity. Positions 107-120 (ADISDTEYSGENTP) are enriched in polar residues. The segment covering 127 to 136 (SRRRRTRSRA) has biased composition (basic residues). Over residues 139–155 (RENSLPASLPSISEANA) the composition is skewed to polar residues. The segment covering 192 to 208 (DGIRRRSSRISERDKRR) has biased composition (basic and acidic residues). Phosphoserine is present on Ser215.

Interacts directly with HST1 and SUM1. Required for the interaction between HST1 and SUM1.

The protein localises to the nucleus. Its function is as follows. Tethering factor required for histone deacetylase HST1-mediated repression. Probably involved in targeting HST1 to a subset of SUM1-regulated genes. This chain is Repression factor of MSEs protein 1 (RFM1), found in Saccharomyces cerevisiae (strain ATCC 204508 / S288c) (Baker's yeast).